An 80-amino-acid polypeptide reads, in one-letter code: Toxin Acra1 (80 aa).

A signal peptide spans 1–22; sequence MMKLVLFSIIVILFSLIGSIHG. Positions 25–80 constitute an LCN-type CS-alpha/beta domain; that stretch reads VPGNYPLDSSGNKYPCTVLGDNQSCIDVCKKHGVKYGYCYSFKCWCEFLEDKNVSI. Cystine bridges form between C40-C63, C49-C68, and C53-C70.

Expressed by the venom gland.

It localises to the secreted. Functionally, probable neurotoxin that inhibits ion channels. Is toxic to mice. Is about 2.8% of the total protein in the venom. The sequence is that of Toxin Acra1 from Androctonus crassicauda (Arabian fat-tailed scorpion).